The primary structure comprises 303 residues: Sterol-4-alpha-carboxylate 3-dehydrogenase ERG26, decarboxylating (303 aa).

Residues Ser-8–Leu-9 and Thr-30–Ser-32 contribute to the NADP(+) site. Ser-71 serves as a coordination point for substrate. Residues Pro-77–Pro-96 form a disordered region. NADP(+) contacts are provided by residues Tyr-102, Lys-106, and Ile-128–Ile-131. Tyr-102 lines the substrate pocket. Catalysis depends on Lys-106, which acts as the Proton donor.

Belongs to the 3-beta-HSD family. Heterotetramer of ERG25, ERG26, ERG27 and ERG28. ERG28 acts as a scaffold to tether ERG27 and other 4,4-demethylation-related enzymes, forming a demethylation enzyme complex, in the endoplasmic reticulum.

The protein localises to the endoplasmic reticulum membrane. The protein operates within steroid metabolism; ergosterol biosynthesis. Functionally, sterol-4-alpha-carboxylate 3-dehydrogenase; part of the third module of ergosterol biosynthesis pathway that includes the late steps of the pathway. ERG26 is a catalytic component of the C-4 demethylation complex that catalyzes the conversion of 4,4-dimethylfecosterol into fecosterol via 4-methylfecosterol. The third module or late pathway involves the ergosterol synthesis itself through consecutive reactions that mainly occur in the endoplasmic reticulum (ER) membrane. Firstly, the squalene synthase ERG9 catalyzes the condensation of 2 farnesyl pyrophosphate moieties to form squalene, which is the precursor of all steroids. Squalene synthase is crucial for balancing the incorporation of farnesyl diphosphate (FPP) into sterol and nonsterol isoprene synthesis. Secondly, squalene is converted into lanosterol by the consecutive action of the squalene epoxidase ERG1 and the lanosterol synthase ERG7. Then, the delta(24)-sterol C-methyltransferase ERG6 methylates lanosterol at C-24 to produce eburicol. Eburicol is the substrate of the sterol 14-alpha demethylase encoded by CYP51A, CYP51B and CYP51C, to yield 4,4,24-trimethyl ergosta-8,14,24(28)-trienol. CYP51B encodes the enzyme primarily responsible for sterol 14-alpha-demethylation, and plays an essential role in ascospore formation. CYP51A encodes an additional sterol 14-alpha-demethylase, induced on ergosterol depletion and responsible for the intrinsic variation in azole sensitivity. The third CYP51 isoform, CYP51C, does not encode a sterol 14-alpha-demethylase, but is required for full virulence on host wheat ears. The C-14 reductase ERG24 then reduces the C14=C15 double bond which leads to 4,4-dimethylfecosterol. A sequence of further demethylations at C-4, involving the C-4 demethylation complex containing the C-4 methylsterol oxidases ERG25, the sterol-4-alpha-carboxylate 3-dehydrogenase ERG26 and the 3-keto-steroid reductase ERG27, leads to the production of fecosterol via 4-methylfecosterol. ERG28 has a role as a scaffold to help anchor ERG25, ERG26 and ERG27 to the endoplasmic reticulum. The C-8 sterol isomerase ERG2 then catalyzes the reaction which results in unsaturation at C-7 in the B ring of sterols and thus converts fecosterol to episterol. The sterol-C5-desaturases ERG3A and ERG3BB then catalyze the introduction of a C-5 double bond in the B ring to produce 5-dehydroepisterol. The C-22 sterol desaturases ERG5A and ERG5B further convert 5-dehydroepisterol into ergosta-5,7,22,24(28)-tetraen-3beta-ol by forming the C-22(23) double bond in the sterol side chain. Finally, ergosta-5,7,22,24(28)-tetraen-3beta-ol is substrate of the C-24(28) sterol reductase ERG4 to produce ergosterol. The chain is Sterol-4-alpha-carboxylate 3-dehydrogenase ERG26, decarboxylating from Gibberella zeae (strain ATCC MYA-4620 / CBS 123657 / FGSC 9075 / NRRL 31084 / PH-1) (Wheat head blight fungus).